The primary structure comprises 853 residues: DNA mismatch repair protein MutS (853 aa).

Position 614 to 621 (614 to 621) interacts with ATP; the sequence is GPNMGGKS.

This sequence belongs to the DNA mismatch repair MutS family.

In terms of biological role, this protein is involved in the repair of mismatches in DNA. It is possible that it carries out the mismatch recognition step. This protein has a weak ATPase activity. In Klebsiella pneumoniae subsp. pneumoniae (strain ATCC 700721 / MGH 78578), this protein is DNA mismatch repair protein MutS.